Here is a 565-residue protein sequence, read N- to C-terminus: Adenine deaminase (565 aa).

Belongs to the metallo-dependent hydrolases superfamily. Adenine deaminase family. Mn(2+) serves as cofactor.

The catalysed reaction is adenine + H2O + H(+) = hypoxanthine + NH4(+). This chain is Adenine deaminase, found in Methylobacterium nodulans (strain LMG 21967 / CNCM I-2342 / ORS 2060).